We begin with the raw amino-acid sequence, 468 residues long: MAISVDQTPAGKYPAKVHAKRVAARIQELGHGDSGIIYLEGQKTHMIEDSDGEMPFRQRRNFFYLSGCPLPDSYLTYDIKADKLTIFIPPIDPASVIWSGLPLSVEEALEIYDVDAVLSTAEVNASLAHYCSAQGGKKVFAIADQVSPHITFLPFQEIDFDVLKRAVEESRVVKDSYEIALLRRANEISSKAHVAVFKAATSARNERELEAIFVGACMSSGCREQSYHPIFASGTNAATLHYQKNDEDLVDSVTGQRRLNMLIDAGAEYRNYCADITRVVPLSGKFSPESREIYDIVLEMQNSSLAMIKAGVMWEDVHSTSHRVAIRGLLKLGILRSTEEELFEKGISVAFFPHGLGHYLGMDTHDTGGNPNYADKDPKFKYLRLRGPLASGGVVTVEPGIYFCRFIIDPYLSSPDLGKYINADVLERYWSVGGVRIEDNVVVTDSGYDNLTTAPKLPEEIERLATEK.

Mn(2+) is bound by residues D264, D275, E398, and E438.

This sequence belongs to the peptidase M24B family. Requires Mn(2+) as cofactor.

It catalyses the reaction Release of any N-terminal amino acid, including proline, that is linked to proline, even from a dipeptide or tripeptide.. In terms of biological role, catalyzes the removal of a penultimate prolyl residue from the N-termini of peptides. This is Probable Xaa-Pro aminopeptidase PEPP (PEPP) from Paracoccidioides brasiliensis (strain Pb18).